The following is a 127-amino-acid chain: Peroxiredoxin-2 (127 aa).

Residues 1–125 (LFFYPLDFTF…ALRLVQGXQY (125 aa)) enclose the Thioredoxin domain. Cysteine 12 functions as the Cysteine sulfenic acid (-SOH) intermediate in the catalytic mechanism. Serine 73 carries the phosphoserine modification.

It belongs to the peroxiredoxin family. AhpC/Prx1 subfamily. In terms of assembly, homodimer; disulfide-linked, upon oxidation. 5 homodimers assemble to form a ring-like decamer. Interacts with TIPIN. In terms of processing, the enzyme can be inactivated by further oxidation of the cysteine sulfenic acid (C(P)-SOH) to sulphinic acid (C(P)-SO2H) instead of its condensation to a disulfide bond. It can be reactivated by forming a transient disulfide bond with sulfiredoxin SRXN1, which reduces the cysteine sulfinic acid in an ATP- and Mg-dependent manner. Acetylation increases resistance to transition to high molecular-mass complexes. Deacetylated by HDAC6 which decreases reducing activity.

It is found in the cytoplasm. It carries out the reaction a hydroperoxide + [thioredoxin]-dithiol = an alcohol + [thioredoxin]-disulfide + H2O. In terms of biological role, thiol-specific peroxidase that catalyzes the reduction of hydrogen peroxide and organic hydroperoxides to water and alcohols, respectively. Plays a role in cell protection against oxidative stress by detoxifying peroxides and as sensor of hydrogen peroxide-mediated signaling events. Might participate in the signaling cascades of growth factors and tumor necrosis factor-alpha by regulating the intracellular concentrations of H(2)O(2). The sequence is that of Peroxiredoxin-2 (PRDX2) from Sus scrofa (Pig).